Consider the following 554-residue polypeptide: Asparagine--tRNA ligase, cytoplasmic (554 aa).

This sequence belongs to the class-II aminoacyl-tRNA synthetase family.

The protein localises to the cytoplasm. It is found in the cytosol. The enzyme catalyses tRNA(Asn) + L-asparagine + ATP = L-asparaginyl-tRNA(Asn) + AMP + diphosphate + H(+). In terms of biological role, catalyzes the attachment of asparagine to tRNA(Asn) in a two-step reaction: asparagine is first activated by ATP to form Asn-AMP and then transferred to the acceptor end of tRNA(Asn). The protein is Asparagine--tRNA ligase, cytoplasmic of Saccharomyces cerevisiae (strain ATCC 204508 / S288c) (Baker's yeast).